We begin with the raw amino-acid sequence, 345 residues long: Biotin synthase (345 aa).

One can recognise a Radical SAM core domain in the interval 67–295 (YKVQLASLLS…KSRIRLSAGR (229 aa)). 3 residues coordinate [4Fe-4S] cluster: Cys-82, Cys-86, and Cys-89. Positions 126, 158, 218, and 290 each coordinate [2Fe-2S] cluster.

It belongs to the radical SAM superfamily. Biotin synthase family. Homodimer. [4Fe-4S] cluster is required as a cofactor. Requires [2Fe-2S] cluster as cofactor.

It catalyses the reaction (4R,5S)-dethiobiotin + (sulfur carrier)-SH + 2 reduced [2Fe-2S]-[ferredoxin] + 2 S-adenosyl-L-methionine = (sulfur carrier)-H + biotin + 2 5'-deoxyadenosine + 2 L-methionine + 2 oxidized [2Fe-2S]-[ferredoxin]. It functions in the pathway cofactor biosynthesis; biotin biosynthesis; biotin from 7,8-diaminononanoate: step 2/2. Functionally, catalyzes the conversion of dethiobiotin (DTB) to biotin by the insertion of a sulfur atom into dethiobiotin via a radical-based mechanism. The protein is Biotin synthase of Prochlorococcus marinus (strain NATL2A).